The sequence spans 303 residues: Coenzyme PQQ synthesis protein B (303 aa).

The protein belongs to the PqqB family.

The protein operates within cofactor biosynthesis; pyrroloquinoline quinone biosynthesis. Its function is as follows. May be involved in the transport of PQQ or its precursor to the periplasm. This chain is Coenzyme PQQ synthesis protein B, found in Pseudomonas savastanoi pv. phaseolicola (strain 1448A / Race 6) (Pseudomonas syringae pv. phaseolicola (strain 1448A / Race 6)).